Here is a 655-residue protein sequence, read N- to C-terminus: p-hydroxybenzoic acid efflux pump subunit AaeB (655 aa).

A run of 11 helical transmembrane segments spans residues 13-33, 38-58, 69-89, 93-113, 121-141, 152-172, 370-390, 407-427, 431-451, 459-479, and 482-502; these read FAVKLASAIVLALFVGFHFQL, WAVLTAAIVAAGPAFAAGGEP, LRIIGTFIGCIAALTIIILMI, LLMVLVCCIWAGFCTWLSSLV, WGLAGYTALIIVITIQTEPLL, EIVIGIVCAIVADLLFSPRSI, LFWLWTGWTSGSGAMVMIAVV, FLYGTIAALPLGALYFLVILP, QSMLLLCISLAVMAFFIGIEV, LGALASTINILVLDNPMTFHF, and FLDSALGQLVGCFLAMMVILL.

It belongs to the aromatic acid exporter ArAE (TC 2.A.85) family.

The protein localises to the cell inner membrane. Forms an efflux pump with AaeA. Could function as a metabolic relief valve, allowing to eliminate certain compounds when they accumulate to high levels in the cell. This is p-hydroxybenzoic acid efflux pump subunit AaeB from Enterobacter cloacae subsp. cloacae (strain ATCC 13047 / DSM 30054 / NBRC 13535 / NCTC 10005 / WDCM 00083 / NCDC 279-56).